A 124-amino-acid polypeptide reads, in one-letter code: Large ribosomal subunit protein bL12 (124 aa).

Belongs to the bacterial ribosomal protein bL12 family. In terms of assembly, homodimer. Part of the ribosomal stalk of the 50S ribosomal subunit. Forms a multimeric L10(L12)X complex, where L10 forms an elongated spine to which 2 to 4 L12 dimers bind in a sequential fashion. Binds GTP-bound translation factors.

Forms part of the ribosomal stalk which helps the ribosome interact with GTP-bound translation factors. Is thus essential for accurate translation. The protein is Large ribosomal subunit protein bL12 of Borreliella burgdorferi (strain ATCC 35210 / DSM 4680 / CIP 102532 / B31) (Borrelia burgdorferi).